The following is a 551-amino-acid chain: Protein MTL1 (551 aa).

Positions 1–35 are cleaved as a signal peptide; sequence MASCNPTRKKSSASSLSMWRTILMALTTLPLSVLS. Over 36–361 the chain is Extracellular; it reads QELVPANSTT…HSGLSKKNRN (326 aa). 3 disordered regions span residues 108 to 143, 206 to 227, and 243 to 263; these read MQVS…IISS, PSSS…SYSS, and SSSS…SSSS. Residues 362–382 form a helical membrane-spanning segment; sequence IIIGCVVGIGAPLILILLILI. Residues 383-551 are Cytoplasmic-facing; sequence YMFCVQPKKT…PNNGLNITNY (169 aa). Positions 429–513 are disordered; the sequence is SSDSPIGSNN…SNSNSQDYND (85 aa). Residues 430 to 441 are compositionally biased toward polar residues; that stretch reads SDSPIGSNNIQN. Acidic residues predominate over residues 466–477; it reads GYDDDDDDDAND. Phosphoserine occurs at positions 481 and 482. The segment covering 498–508 has biased composition (low complexity); that stretch reads SASYSMSNSNS.

This sequence belongs to the MID2 like cell wall stress sensor family.

The protein localises to the membrane. Involved in cell integrity signaling during vegetative growth at elevated temperature. Acts positively on the PKC1-MAPK pathway. Cell membrane sensor of oxidative stress in the cell integrity pathway upstream of PKC1. Required to transmit the oxidative signal to SLT2 and to restore the correct actin organization following oxidative stress. Multicopy suppressor of 1,3-beta-glucan synthase (GS) mutation. Also suppresses RGD1 null mutations. This Saccharomyces cerevisiae (strain ATCC 204508 / S288c) (Baker's yeast) protein is Protein MTL1 (MTL1).